The following is a 361-amino-acid chain: ATP phosphoribosyltransferase regulatory subunit (361 aa).

Belongs to the class-II aminoacyl-tRNA synthetase family. HisZ subfamily. As to quaternary structure, heteromultimer composed of HisG and HisZ subunits.

The protein localises to the cytoplasm. It functions in the pathway amino-acid biosynthesis; L-histidine biosynthesis; L-histidine from 5-phospho-alpha-D-ribose 1-diphosphate: step 1/9. Its function is as follows. Required for the first step of histidine biosynthesis. May allow the feedback regulation of ATP phosphoribosyltransferase activity by histidine. The chain is ATP phosphoribosyltransferase regulatory subunit from Thermus thermophilus (strain ATCC 27634 / DSM 579 / HB8).